The primary structure comprises 935 residues: GPI ethanolamine phosphate transferase 1 (935 aa).

At 1–5 (MFGRL) the chain is on the cytoplasmic side. Residues 6–26 (LLLGILFHVVFLKSIFDIYFV) form a helical membrane-spanning segment. Over 27 to 449 (TPLIHGMKQY…LQRYDWLLLR (423 aa)) the chain is Lumenal. N-linked (GlcNAc...) asparagine glycosylation is found at N86, N134, N315, and N398. Residues 450-470 (SIVFFGYLSWIGYVICFVFSL) form a helical membrane-spanning segment. Topologically, residues 471–483 (NIEPSSKIVKPVS) are cytoplasmic. The helical transmembrane segment at 484-503 (VVKRVAFNIPFLLICIFFYI) threads the bilayer. Over 504–509 (QSSPPF) the chain is Lumenal. Residues 510-530 (YYGYALFPTIFLQLIHSIFPN) form a helical membrane-spanning segment. Residues 531 to 547 (TKLGFKNFLTVAKQKHG) are Cytoplasmic-facing. A helical membrane pass occupies residues 548 to 568 (FSLLKILFISLCILCLLQFIV). The Lumenal segment spans residues 569–576 (YSYFHREG). A helical membrane pass occupies residues 577–597 (FSVILMGLAAWPWLLHADYAF). Residues 598-600 (SHK) lie on the Cytoplasmic side of the membrane. A helical transmembrane segment spans residues 601-621 (TISVSWSVLTSLLCFFTILPV). Residues 622–626 (NKKES) lie on the Lumenal side of the membrane. Residues 627–647 (LLFIFAGGFAMSVAGVFYILY) form a helical membrane-spanning segment. At 648–663 (RRNQAFQYSSTVTNKQ) the chain is on the cytoplasmic side. Residues 664–684 (LVLQVLIIMATVPVTLKIADS) form a helical membrane-spanning segment. Topologically, residues 685 to 688 (LQRN) are lumenal. The chain crosses the membrane as a helical span at residues 689–709 (IAIPPILRLVAFGLFITSYII). The Cytoplasmic portion of the chain corresponds to 710–737 (PSHHIRSCKHYFLDRLAILFLTFSPTMC). The chain crosses the membrane as a helical span at residues 738 to 758 (MLSISFEALFYVVLFITLGLW). Topologically, residues 759-792 (MELETELQKYTEQLHPEYSRKKDAKFHLSLSHIR) are lumenal. A helical membrane pass occupies residues 793–813 (ISLFFYIFINVAFFGTGNVAS). The Cytoplasmic segment spans residues 814 to 835 (LSTFALDSVKRFIPVFNPVTQG). A helical membrane pass occupies residues 836–856 (ALLMYTILVPFIALSAAFGIM). Topologically, residues 857 to 865 (NKRLGGIQQ) are lumenal. Residues 866-886 (VTFFLAVGMADIVTINFFYLV) traverse the membrane as a helical segment. Over 887–894 (KDEGSWKD) the chain is Cytoplasmic. The chain crosses the membrane as a helical span at residues 895-915 (IGVSISHFCISNFLILFITAL). Residues 916–935 (EHASAILCKNITYTIHEKVN) are Lumenal-facing. N-linked (GlcNAc...) asparagine glycosylation is present at N925.

The protein belongs to the PIGG/PIGN/PIGO family. PIGN subfamily.

The protein resides in the endoplasmic reticulum membrane. It participates in glycolipid biosynthesis; glycosylphosphatidylinositol-anchor biosynthesis. Its function is as follows. Ethanolamine phosphate transferase involved in glycosylphosphatidylinositol-anchor biosynthesis. Transfers ethanolamine phosphate to the first alpha-1,4-linked mannose of the glycosylphosphatidylinositol precursor of GPI-anchor. The chain is GPI ethanolamine phosphate transferase 1 (its8) from Schizosaccharomyces pombe (strain 972 / ATCC 24843) (Fission yeast).